A 388-amino-acid chain; its full sequence is Chaperone protein DnaJ (388 aa).

A J domain is found at 5–70; sequence DYYEVLGVAR…QKRAAYDRFG (66 aa). A CR-type zinc finger spans residues 141-219; that stretch reads GKTETIRLPT…CGGAGRVTRE (79 aa). Zn(2+)-binding residues include Cys154, Cys157, Cys171, Cys174, Cys193, Cys196, Cys207, and Cys210. CXXCXGXG motif repeat units follow at residues 154-161, 171-178, 193-200, and 207-214; these read CEVCAGSG, CPTCGGYG, CPNCHGRG, and CTACGGAG.

It belongs to the DnaJ family. In terms of assembly, homodimer. Zn(2+) is required as a cofactor.

The protein resides in the cytoplasm. Functionally, participates actively in the response to hyperosmotic and heat shock by preventing the aggregation of stress-denatured proteins and by disaggregating proteins, also in an autonomous, DnaK-independent fashion. Unfolded proteins bind initially to DnaJ; upon interaction with the DnaJ-bound protein, DnaK hydrolyzes its bound ATP, resulting in the formation of a stable complex. GrpE releases ADP from DnaK; ATP binding to DnaK triggers the release of the substrate protein, thus completing the reaction cycle. Several rounds of ATP-dependent interactions between DnaJ, DnaK and GrpE are required for fully efficient folding. Also involved, together with DnaK and GrpE, in the DNA replication of plasmids through activation of initiation proteins. This is Chaperone protein DnaJ from Methylobacterium nodulans (strain LMG 21967 / CNCM I-2342 / ORS 2060).